Consider the following 375-residue polypeptide: Alcohol dehydrogenase 1 (375 aa).

N-acetylserine is present on Ser2. The Zn(2+) site is built by Cys47, His68, Cys98, Cys101, Cys104, Cys112, and Cys175. NAD(+)-binding positions include 200 to 205, Asp224, and Lys229; that span reads WSGRVG. Lys234 bears the N6-succinyllysine mark. 293–295 is an NAD(+) binding site; it reads VGV. Position 340 is an N6-succinyllysine (Lys340). Residue Arg370 coordinates NAD(+).

This sequence belongs to the zinc-containing alcohol dehydrogenase family. Class-I subfamily. In terms of assembly, homodimer. The cofactor is Zn(2+).

It is found in the cytoplasm. It carries out the reaction a primary alcohol + NAD(+) = an aldehyde + NADH + H(+). The enzyme catalyses a secondary alcohol + NAD(+) = a ketone + NADH + H(+). This is Alcohol dehydrogenase 1 (ADH1) from Geomys bursarius (Plains pocket gopher).